The primary structure comprises 471 residues: Putative multidrug resistance protein MdtD (471 aa).

The Periplasmic portion of the chain corresponds to 1–11; sequence MTDLPDSTRWQ. A helical transmembrane segment spans residues 12-32; sequence LWIVAFGFFMQSLDTTIVNTA. Over 33–48 the chain is Cytoplasmic; the sequence is LPSMAQSLGESPLHMH. The helical transmembrane segment at 49 to 69 threads the bilayer; that stretch reads MVIVSYVLTVAVMLPASGWLA. Topologically, residues 70 to 76 are periplasmic; sequence DKVGVRN. The helical transmembrane segment at 77–97 threads the bilayer; sequence IFFTAIVLFTLGSLFCALSGT. Topologically, residues 98 to 101 are cytoplasmic; that stretch reads LNEL. The chain crosses the membrane as a helical span at residues 102-124; that stretch reads LLARALQGVGGAMMVPVGRLTVM. At 125–137 the chain is on the periplasmic side; the sequence is KIVPREQYMAAMT. A helical membrane pass occupies residues 138–158; the sequence is FVTLPGQVGPLLGPALGGLLV. The Cytoplasmic segment spans residues 159–164; the sequence is EYASWH. Residues 165–185 traverse the membrane as a helical segment; the sequence is WIFLINIPVGIIGAIATLMLM. Residues 186 to 196 lie on the Periplasmic side of the membrane; that stretch reads PNYTMQTRRFD. The helical transmembrane segment at 197–217 threads the bilayer; it reads LSGFLLLAVGMAVLTLALDGS. At 218-224 the chain is on the cytoplasmic side; that stretch reads KGTGLSP. The chain crosses the membrane as a helical span at residues 225–245; the sequence is LAIAGLVAVGVVALVLYLLHA. Topologically, residues 246-262 are periplasmic; that stretch reads RNNNRALFSLKLFRTRT. Residues 263–283 form a helical membrane-spanning segment; it reads FSLGLAGSFAGRIGSGMLPFM. Over 284–285 the chain is Cytoplasmic; it reads TP. A helical membrane pass occupies residues 286–306; the sequence is VFLQIGLGFSPFHAGLMMIPM. The Periplasmic segment spans residues 307-341; it reads VLGSMGMKRIVVQVVNRFGYRRVLVATTLGLSLVT. The chain crosses the membrane as a helical span at residues 342–362; the sequence is MLFMTTALLGWYYVLPFVLFL. Over 363–395 the chain is Cytoplasmic; it reads QGMVNSTRFSSMNTLTLKDLPDNLASSGNSLLS. The helical transmembrane segment at 396 to 416 threads the bilayer; it reads MIMQLSMSIGVTIAGLLLGLF. Topologically, residues 417 to 430 are periplasmic; sequence GSQHVSVDSGTTQT. A helical membrane pass occupies residues 431–451; the sequence is VFMYTWLSMAFIIALPAFIFA. The Cytoplasmic portion of the chain corresponds to 452-471; the sequence is RVPNDTHQNVAISRRKRSAQ.

The protein belongs to the major facilitator superfamily. TCR/Tet family.

It is found in the cell inner membrane. This Escherichia coli O7:K1 (strain IAI39 / ExPEC) protein is Putative multidrug resistance protein MdtD.